The sequence spans 45 residues: MSKRTFQPNNRRRAKVHGFRLRMRTRAGRAILAARRRKGRVELSA.

It belongs to the bacterial ribosomal protein bL34 family.

This is Large ribosomal subunit protein bL34 from Beutenbergia cavernae (strain ATCC BAA-8 / DSM 12333 / CCUG 43141 / JCM 11478 / NBRC 16432 / NCIMB 13614 / HKI 0122).